The chain runs to 159 residues: NADH-quinone oxidoreductase subunit I (159 aa).

4Fe-4S ferredoxin-type domains lie at 51 to 80 and 90 to 119; these read RRYE…IEAD and TRYD…EGPN. [4Fe-4S] cluster is bound by residues cysteine 60, cysteine 63, cysteine 66, cysteine 70, cysteine 99, cysteine 102, cysteine 105, and cysteine 109.

This sequence belongs to the complex I 23 kDa subunit family. In terms of assembly, NDH-1 is composed of 14 different subunits. Subunits NuoA, H, J, K, L, M, N constitute the membrane sector of the complex. The cofactor is [4Fe-4S] cluster.

It localises to the cell inner membrane. The catalysed reaction is a quinone + NADH + 5 H(+)(in) = a quinol + NAD(+) + 4 H(+)(out). NDH-1 shuttles electrons from NADH, via FMN and iron-sulfur (Fe-S) centers, to quinones in the respiratory chain. The immediate electron acceptor for the enzyme in this species is believed to be ubiquinone. Couples the redox reaction to proton translocation (for every two electrons transferred, four hydrogen ions are translocated across the cytoplasmic membrane), and thus conserves the redox energy in a proton gradient. The chain is NADH-quinone oxidoreductase subunit I from Rickettsia bellii (strain OSU 85-389).